Consider the following 95-residue polypeptide: MKFRPLHDRILVKRVEEETKTKGGIIIPDTAKEKPIEGKVMAVGNGRLGEDGKLIPLEVKKGDRVLFGKYGGTEVKMDGQEYLIMREDDILGILE.

It belongs to the GroES chaperonin family. As to quaternary structure, heptamer of 7 subunits arranged in a ring. Interacts with the chaperonin GroEL.

It is found in the cytoplasm. Its function is as follows. Together with the chaperonin GroEL, plays an essential role in assisting protein folding. The GroEL-GroES system forms a nano-cage that allows encapsulation of the non-native substrate proteins and provides a physical environment optimized to promote and accelerate protein folding. GroES binds to the apical surface of the GroEL ring, thereby capping the opening of the GroEL channel. The polypeptide is Co-chaperonin GroES (Desulfosudis oleivorans (strain DSM 6200 / JCM 39069 / Hxd3) (Desulfococcus oleovorans)).